Here is a 972-residue protein sequence, read N- to C-terminus: Cycloisomaltooligosaccharide glucanotransferase (972 aa).

The signal sequence occupies residues 1–38 (MVRFMYALRKRRLSLLLAMSLLVMCVASVVSPPPQALA). CBM6 domains lie at 421–546 (TRYE…LTLG) and 748–871 (DIYE…LDLD).

The protein belongs to the glycosyl hydrolase 66 family. In terms of assembly, monomer.

The enzyme catalyses cyclizes part of a (1-&gt;6)-alpha-D-glucan chain by formation of a (1-&gt;6)-alpha-D-glucosidic bond.. In terms of biological role, produces cycloisomaltooligosaccharide from dextran containing 7, 8 or 9 glucose units. The enzyme is specific for (1-&gt;6)-alpha-D-glucans (dextrans) and, without activity toward (1-&gt;4)-alpha-D-glucans, such as amylose. It also has no activity on oligosaccharides, such as amylopectin and pullulan, containing (1-&gt;6)-alpha-D-glucosidic linkages at branch points. This Niallia circulans (Bacillus circulans) protein is Cycloisomaltooligosaccharide glucanotransferase.